The following is a 183-amino-acid chain: Large ribosomal subunit protein eL18 (183 aa).

Residues 146–183 (HFGPAPGVPHSHTKPYVRSKGRKFEKARGRRKSRGFRV) are disordered. Basic residues-rich tracts occupy residues 156-166 (SHTKPYVRSKG) and 173-183 (RGRRKSRGFRV).

The protein belongs to the eukaryotic ribosomal protein eL18 family.

The chain is Large ribosomal subunit protein eL18 (RPL18) from Cicer arietinum (Chickpea).